We begin with the raw amino-acid sequence, 214 residues long: MIAFILLSLAAVLQQSFGTVDFDSESPRRPEKQREIVNMHNSLRRSVSPTASNMLKMEWYPEAASNAERWAYNCITGHSSNPSRVIDGIQCGENIYMSPVPITWTEIIQIWYDENKNFVYGVGANPPGSMIGHYTQIVWYKSYRIGCAAVYCPSTYYSYFYVCQYCPTGNFNGLYATPYKSGPPCGDCPSACVKGLCTNPCTVENKFTNCNTLV.

Residues 1-18 form the signal peptide; sequence MIAFILLSLAAVLQQSFG. Positions 37 to 165 constitute an SCP domain; the sequence is VNMHNSLRRS…YYSYFYVCQY (129 aa). Intrachain disulfides connect C74–C152, C91–C166, C147–C163, C185–C192, and C188–C197. Positions 201–214 constitute a ShKT domain; sequence CTVENKFTNCNTLV.

Belongs to the CRISP family. In terms of tissue distribution, expressed by the venom gland.

It localises to the secreted. Functionally, blocks contraction of smooth muscle elicited by high potassium-induced depolarization, but does not block caffeine-stimulated contraction. May target voltage-gated calcium channels on smooth muscle. The protein is Cysteine-rich venom protein LEI1 of Leioheterodon madagascariensis (Malagasy giant hognose snake).